The sequence spans 180 residues: UPF0397 protein SSA_0592 (180 aa).

5 consecutive transmembrane segments (helical) span residues valine 9 to threonine 29, leucine 45 to isoleucine 65, glycine 72 to phenylalanine 92, leucine 113 to valine 133, and isoleucine 146 to alanine 166.

This sequence belongs to the UPF0397 family.

The protein resides in the cell membrane. This is UPF0397 protein SSA_0592 from Streptococcus sanguinis (strain SK36).